Here is a 195-residue protein sequence, read N- to C-terminus: Thymidine kinase (195 aa).

Residues 9–16 (STMNAGKS) and 87–90 (DEAQ) each bind ATP. Catalysis depends on glutamate 88, which acts as the Proton acceptor. Zn(2+) contacts are provided by cysteine 145, cysteine 147, cysteine 182, and histidine 185.

This sequence belongs to the thymidine kinase family. Homotetramer.

The protein localises to the cytoplasm. It carries out the reaction thymidine + ATP = dTMP + ADP + H(+). In Mannheimia succiniciproducens (strain KCTC 0769BP / MBEL55E), this protein is Thymidine kinase.